A 476-amino-acid polypeptide reads, in one-letter code: Probable cytosolic Fe-S cluster assembly factor GI11683 (476 aa).

8 residues coordinate [4Fe-4S] cluster: Cys-23, Cys-68, Cys-71, Cys-74, Cys-187, Cys-243, Cys-395, and Cys-399.

The protein belongs to the NARF family.

Its function is as follows. Component of the cytosolic iron-sulfur (Fe/S) protein assembly machinery. Required for maturation of extramitochondrial Fe/S proteins. This Drosophila mojavensis (Fruit fly) protein is Probable cytosolic Fe-S cluster assembly factor GI11683.